A 60-amino-acid polypeptide reads, in one-letter code: Small integral membrane protein 3 (60 aa).

A helical transmembrane segment spans residues 20–40; it reads IWAIVLIILATVVIMTSLFLC.

It is found in the membrane. In Rattus norvegicus (Rat), this protein is Small integral membrane protein 3 (Smim3).